A 603-amino-acid chain; its full sequence is Elongation factor 4 (603 aa).

Residues 2–184 (NHIRNFSIIA…AVIARVPPPK (183 aa)) form the tr-type G domain. GTP-binding positions include 14–19 (DHGKST) and 131–134 (NKMD).

Belongs to the TRAFAC class translation factor GTPase superfamily. Classic translation factor GTPase family. LepA subfamily.

It is found in the cell inner membrane. It catalyses the reaction GTP + H2O = GDP + phosphate + H(+). Its function is as follows. Required for accurate and efficient protein synthesis under certain stress conditions. May act as a fidelity factor of the translation reaction, by catalyzing a one-codon backward translocation of tRNAs on improperly translocated ribosomes. Back-translocation proceeds from a post-translocation (POST) complex to a pre-translocation (PRE) complex, thus giving elongation factor G a second chance to translocate the tRNAs correctly. Binds to ribosomes in a GTP-dependent manner. This Polaromonas sp. (strain JS666 / ATCC BAA-500) protein is Elongation factor 4.